A 193-amino-acid polypeptide reads, in one-letter code: Segregation and condensation protein B (193 aa).

Belongs to the ScpB family. Homodimer. Homodimerization may be required to stabilize the binding of ScpA to the Smc head domains. Component of a cohesin-like complex composed of ScpA, ScpB and the Smc homodimer, in which ScpA and ScpB bind to the head domain of Smc. The presence of the three proteins is required for the association of the complex with DNA.

The protein localises to the cytoplasm. In terms of biological role, participates in chromosomal partition during cell division. May act via the formation of a condensin-like complex containing Smc and ScpA that pull DNA away from mid-cell into both cell halves. The protein is Segregation and condensation protein B of Clostridium botulinum (strain ATCC 19397 / Type A).